Reading from the N-terminus, the 549-residue chain is Coiled-coil domain-containing protein 102A (549 aa).

3 disordered regions span residues 1–61, 135–195, and 207–248; these read MSHG…TAPA, LAGA…GSQE, and PEEP…EEDA. Ser-12, Ser-26, and Ser-28 each carry phosphoserine. Residues 37–55 show a composition bias toward pro residues; it reads SLPPTPPSGTPSPGPPPSL. A coiled-coil region spans residues 69–160; that stretch reads ESREELRLRE…ARGRELARLR (92 aa). 2 stretches are compositionally biased toward basic and acidic residues: residues 135-158 and 165-187; these read LAGA…ELAR and AADK…DIGA. Coiled coils occupy residues 263-398 and 426-517; these read KVLL…NASA and KLKK…NAPL. Disordered stretches follow at residues 472-496 and 509-549; these read ELDE…QSEN and RRQQ…IQVA. Acidic residues predominate over residues 530-549; sequence EAGDGASDLDEDEDLQIQVA. Ser-536 carries the post-translational modification Phosphoserine.

The polypeptide is Coiled-coil domain-containing protein 102A (Ccdc102a) (Mus musculus (Mouse)).